The following is a 391-amino-acid chain: MKHPYPFGGQFMPEILMAPVQDLSNSWKSLQNHSDFKNELDSVLKNYAGRPTPLTEIKNFAKAIHGPRIFLKREDLLHTGAHKINNALGQCLLAKHLGKTRIIAETGAGQHGVATATACGCLGLECVIYMGAKDIERQKPNVDKMNLLGAEVISVNQGAQTLKDAVNEALRDWSKNYESTHYCLGSALGPSPYPEMVRNFQSVISLEVKSQLQEIGFSPDLLIACVGGGSNAIGFFHHFIPDTRVKLVGVEAGGLGIESGHHAARFATGRPGVLHGFYSYLLQDNEGQVLPTHSISAGLDYPAVGPDHAVLYESGRASYTVATDKAALEAFFLLSRLEGIIPALESSHALAELINIAPTLPKESVVVVNLSGRGDKDLEQITNLIKAGNNE.

The residue at position 83 (Lys83) is an N6-(pyridoxal phosphate)lysine.

Belongs to the TrpB family. Tetramer of two alpha and two beta chains. Pyridoxal 5'-phosphate serves as cofactor.

It catalyses the reaction (1S,2R)-1-C-(indol-3-yl)glycerol 3-phosphate + L-serine = D-glyceraldehyde 3-phosphate + L-tryptophan + H2O. The protein operates within amino-acid biosynthesis; L-tryptophan biosynthesis; L-tryptophan from chorismate: step 5/5. Functionally, the beta subunit is responsible for the synthesis of L-tryptophan from indole and L-serine. In Chlamydia caviae (strain ATCC VR-813 / DSM 19441 / 03DC25 / GPIC) (Chlamydophila caviae), this protein is Tryptophan synthase beta chain 2 (trpB2).